We begin with the raw amino-acid sequence, 443 residues long: Eukaryotic translation initiation factor 5 (443 aa).

A GTP-binding site is contributed by 29–36; sequence GRGNGIKT. The segment covering 147-178 has biased composition (basic and acidic residues); it reads PEVKKGSKDKKAMRRAEKERLKEGEAADEELK. Disordered stretches follow at residues 147–244 and 271–293; these read PEVK…LTDT and EPEK…NSKN. The segment covering 179 to 188 has biased composition (basic residues); that stretch reads KVKKEVKKKG. The segment covering 207–227 has biased composition (basic and acidic residues); sequence SGSDEDRRSPTHKQIEEKEEA. The span at 228 to 237 shows a compositional bias: acidic residues; that stretch reads KDEDDDDDDG. The span at 280–291 shows a compositional bias: low complexity; the sequence is SNQNGGSQNGNS. Residues 284 to 443 enclose the W2 domain; sequence GGSQNGNSKN…QNAESESDEE (160 aa).

This sequence belongs to the eIF-2-beta/eIF-5 family.

In terms of biological role, catalyzes the hydrolysis of GTP bound to the 40S ribosomal initiation complex (40S.mRNA.Met-tRNA[F].eIF-2.GTP) with the subsequent joining of a 60S ribosomal subunit resulting in the release of eIF-2 and the guanine nucleotide. The subsequent joining of a 60S ribosomal subunit results in the formation of a functional 80S initiation complex (80S.mRNA.Met-tRNA[F]). In Phaseolus vulgaris (Kidney bean), this protein is Eukaryotic translation initiation factor 5 (EIF5).